The primary structure comprises 205 residues: CASP-like protein 0U1 (205 aa).

The Cytoplasmic portion of the chain corresponds to M1 to F66. One can recognise an MARVEL domain in the interval A10 to R162. The chain crosses the membrane as a helical span at residues L67–I87. Topologically, residues Q88 to V90 are extracellular. A helical membrane pass occupies residues P91–F111. Residues S112–K137 are Cytoplasmic-facing. A helical transmembrane segment spans residues A138–W158. At K159–E167 the chain is on the extracellular side. A helical membrane pass occupies residues G168–G188. Residues G189–A205 lie on the Cytoplasmic side of the membrane.

It belongs to the Casparian strip membrane proteins (CASP) family. Homodimer and heterodimers.

Its subcellular location is the cell membrane. This chain is CASP-like protein 0U1, found in Micromonas pusilla (strain CCMP1545) (Picoplanktonic green alga).